The primary structure comprises 133 residues: Ubiquitin-like FUBI-ribosomal protein eS30 fusion protein (133 aa).

In terms of domain architecture, Ubiquitin-like spans 1–74 (MQLFVRAQEL…LEVAGRMLGG (74 aa)). A disordered region spans residues 84-110 (GKVRGQTPKVAKQEKKKKKTGRAKRRM). The span at 97 to 110 (EKKKKKTGRAKRRM) shows a compositional bias: basic residues. Lys-125 is subject to N6-succinyllysine.

The protein in the N-terminal section; belongs to the ubiquitin family. This sequence in the C-terminal section; belongs to the eukaryotic ribosomal protein eS30 family. In terms of assembly, component of the 40S subunit of the ribosome. Post-translationally, FUBI is cleaved from ribosomal protein S30 by the deubiquitinase USP36 before the assembly of ribosomal protein S30 into pre-40S ribosomal particles. FUBI removal from ribosomal protein S30 is a crucial event for the final maturation of pre-40S particles.

It is found in the cytoplasm. The protein localises to the nucleus. Its function is as follows. May have pro-apoptotic activity. In terms of biological role, component of the 40S subunit of the ribosome. Contributes to the assembly and function of 40S ribosomal subunits. The sequence is that of Ubiquitin-like FUBI-ribosomal protein eS30 fusion protein from Homo sapiens (Human).